Consider the following 492-residue polypeptide: Protein odr-4 homolog (492 aa).

A disordered region spans residues 251–270 (LQPTSTTGGTATASSNTTDS). The span at 254 to 268 (TSTTGGTATASSNTT) shows a compositional bias: low complexity. A helical membrane pass occupies residues 469–489 (MVGIAVALLVLLSSVALHFVL).

The protein belongs to the ODR-4 family.

The protein localises to the membrane. Its function is as follows. May play a role in the trafficking of a subset of G-protein coupled receptors. In Drosophila melanogaster (Fruit fly), this protein is Protein odr-4 homolog.